The primary structure comprises 236 residues: Rab-like protein 3 (236 aa).

Residues 1–235 are small GTPase-like; sequence MASLDRVKVL…GGGALKNFHC (235 aa). GTP contacts are provided by residues 16 to 21, 148 to 150, and 179 to 180; these read GVGKSS, KLD, and DC.

This sequence belongs to the small GTPase superfamily. Rab family. In terms of assembly, homodimer. Interacts with GPR89; the interaction stabilizes GPR89. Interacts with RAP1GDS1.

Its function is as follows. Required for KRAS signaling regulation and modulation of cell proliferation. Regulator of KRAS prenylation, and probably prenylation of other small GTPases. Required for lymphocyte development and function. Not required for myeloid cell development. The polypeptide is Rab-like protein 3 (Rabl3) (Mus musculus (Mouse)).